A 182-amino-acid chain; its full sequence is MEIKFTIKQVVAVGIGAALFVVIGMINIPTPVPNTSIQLQYAVQALLSIIFGPIIGLLVGLIGHAIKDSLVGYGLWWTWIIASGLFGLVVGLFRKYVRVINSVFDWKDILIFNLIQLLANALVWGVLAPLGDVVIYQEAAEKVFAQGIVAGIANGVSVAIAGTLLLLAYAGTQTRAGSLKKD.

5 consecutive transmembrane segments (helical) span residues 10–30 (VVAVGIGAALFVVIGMINIPT), 46–66 (LLSIIFGPIIGLLVGLIGHAI), 73–93 (YGLWWTWIIASGLFGLVVGLF), 109–129 (ILIFNLIQLLANALVWGVLAP), and 148–168 (IVAGIANGVSVAIAGTLLLLA).

The protein belongs to the UPF0397 family.

The protein resides in the cell membrane. The chain is UPF0397 protein SPG_0438 from Streptococcus pneumoniae serotype 19F (strain G54).